The chain runs to 768 residues: Protein ITPRID2 (768 aa).

Disordered stretches follow at residues 1 to 24 (MTTEDHLLRTASQHSDSSGFAEDS), 39 to 78 (LQAMGSSADSCDSETTVTSLGEDLATPTAQDQPYFNESEE), and 98 to 124 (RKSGSQDFPQCNTIENPGTKQSTCSPG). 2 stretches are compositionally biased toward polar residues: residues 39–57 (LQAMGSSADSCDSETTVTS) and 102–122 (SQDFPQCNTIENPGTKQSTCS). Residues Ser153, Ser177, Ser246, Ser248, Ser255, Ser268, Ser276, and Ser312 each carry the phosphoserine modification. Residues 315–338 (SVKKEEAPQSEAPRVEECHHGRTP) form a disordered region. Positions 316–334 (VKKEEAPQSEAPRVEECHH) are enriched in basic and acidic residues. Lys317 participates in a covalent cross-link: Glycyl lysine isopeptide (Lys-Gly) (interchain with G-Cter in SUMO2). Residues Ser378 and Ser411 each carry the phosphoserine modification. Positions 468–546 (QELQVMRRSL…GLEEQLRAVR (79 aa)) form a coiled coil. Residues Ser549, Ser564, Ser569, Ser572, Ser627, and Ser643 each carry the phosphoserine modification. 2 disordered regions span residues 605–647 (IPPG…VGKP) and 663–718 (ALTP…AAEE). Residues 610 to 627 (SSESVFSQATSESSSVCS) show a composition bias toward polar residues. The residue at position 665 (Thr665) is a Phosphothreonine. Residues 667–677 (TAPSRTGSVQT) are compositionally biased toward polar residues. Ser670 carries the post-translational modification Phosphoserine. Thr677 is modified (phosphothreonine). A compositionally biased stretch (acidic residues) spans 682 to 694 (ESSEEVDAAEEAP).

The protein localises to the cytoplasm. This Pongo abelii (Sumatran orangutan) protein is Protein ITPRID2.